We begin with the raw amino-acid sequence, 180 residues long: FMN reductase (NADH) RutF (180 aa).

The protein belongs to the non-flavoprotein flavin reductase family. RutF subfamily.

It catalyses the reaction FMNH2 + NAD(+) = FMN + NADH + 2 H(+). In terms of biological role, catalyzes the reduction of FMN to FMNH2 which is used to reduce pyrimidine by RutA via the Rut pathway. The polypeptide is FMN reductase (NADH) RutF (Bradyrhizobium diazoefficiens (strain JCM 10833 / BCRC 13528 / IAM 13628 / NBRC 14792 / USDA 110)).